The primary structure comprises 347 residues: Inositol 2-dehydrogenase (347 aa).

It belongs to the Gfo/Idh/MocA family. As to quaternary structure, homotetramer.

It carries out the reaction myo-inositol + NAD(+) = scyllo-inosose + NADH + H(+). In terms of biological role, involved in the oxidation of myo-inositol (MI) to 2-keto-myo-inositol (2KMI or 2-inosose). The chain is Inositol 2-dehydrogenase from Rubrobacter xylanophilus (strain DSM 9941 / JCM 11954 / NBRC 16129 / PRD-1).